We begin with the raw amino-acid sequence, 656 residues long: MLMSQITIILPDNSTKVFDHEPTALEVAMSIGPRLAKETLGAKLNGSTEISDLRTVLKDQTKVALVTTKSPESVEVVRHSCAHIMAQAIQDIWPEVKVTIGPVIDNGFYYDFDSPFAFTEEHFEKIEKKMSEIVSKDLPIHREDWPIQKAIETFKGMNERFKVELIEDLAKKGETTVGIYFNGTSWFDLCRGPHIQSTGQIKAFKLLSVAGAYWRGDEKNAQLQRVYATAFNDKKDLETYLHNIEEAKKRDHRKLGKELGMFYFNELAPGSPFFTGKGATVYNSLQTYLRELYFETGYQEVITPQIFDVNLFHTSGHYQNYKENMFFTKVDERDFASKPMNCPSHCLLYNSEKYSYRDLPIKMADFGRLHRYEKSGAMHGLTRVRTFCQDDAHIFCRMDQLQEEIAKFMNLLNRVYDKLGMGNYKIFLSTRPDNRMGSEEYWDMAEGALAEALKSLNLPFELNPGDGAFYGPKLDIMFVDALNRPWQLGTLQVDPNLPQAFDLKYTGEDNKEHRPVMLHRAILGSLERFIGVYLEHTAGHLPPWMMPVQVAILNVTDRVNSFCEELQNSLKGHSVRVEFDRRNEKLNYKIREAQLQKIPYMIIVGDKEAESRTVSLRLRDGSEHKGLTVDQVMNLITTDIKTRSLQSSLAKSATTN.

The TGS domain maps to 2 to 67 (LMSQITIILP…KDQTKVALVT (66 aa)). Residues 251 to 542 (DHRKLGKELG…YLEHTAGHLP (292 aa)) form a catalytic region. Zn(2+) contacts are provided by Cys342, His393, and His519.

The protein belongs to the class-II aminoacyl-tRNA synthetase family. As to quaternary structure, homodimer. It depends on Zn(2+) as a cofactor.

Its subcellular location is the cytoplasm. It carries out the reaction tRNA(Thr) + L-threonine + ATP = L-threonyl-tRNA(Thr) + AMP + diphosphate + H(+). In terms of biological role, catalyzes the attachment of threonine to tRNA(Thr) in a two-step reaction: L-threonine is first activated by ATP to form Thr-AMP and then transferred to the acceptor end of tRNA(Thr). Also edits incorrectly charged L-seryl-tRNA(Thr). In Bdellovibrio bacteriovorus (strain ATCC 15356 / DSM 50701 / NCIMB 9529 / HD100), this protein is Threonine--tRNA ligase.